We begin with the raw amino-acid sequence, 119 residues long: HTH-type transcriptional regulator SarX (119 aa).

Positions 55 to 78 (LKTAMDELDLSRTKLLVSIRRLIE) form a DNA-binding region, H-T-H motif.

The protein belongs to the SarA family.

The protein localises to the cytoplasm. Functionally, involved in the regulation of virulence genes. Acts as a repressor of the agr locus and consequently targets genes regulated by the agr system such as sspA, hla and hlb. Binds directly to the agr promoter region. In Staphylococcus aureus (strain bovine RF122 / ET3-1), this protein is HTH-type transcriptional regulator SarX (sarX).